A 194-amino-acid polypeptide reads, in one-letter code: Prefoldin subunit 3 (194 aa).

The protein belongs to the prefoldin subunit alpha family. Heterohexamer of two PFD-alpha type and four PFD-beta type subunits. Interacts with itself. Interacts with Vhl and betaTub56D/tubulin beta-1 chain. Interacts with tubulin alpha-beta heterodimers by itself or in complex with Vhl. Does not interact with microtubules (MTs). Expressed in larval central nervous system (CNS) and pupal testis (at protein level).

It is found in the cytoplasm. Its function is as follows. Binds specifically to cytosolic chaperonin (c-CPN) and transfers target proteins to it. Binds to nascent polypeptide chain and promotes folding in an environment in which there are many competing pathways for nonnative proteins. Required for tubulin stability and spindle and centrosome formation in cooperation with Vhl. In Drosophila melanogaster (Fruit fly), this protein is Prefoldin subunit 3 (mgr).